A 267-amino-acid chain; its full sequence is Putative transcription factor Ovo-like 1 (267 aa).

C2H2-type zinc fingers lie at residues 118-140 (FTCHICQKAFTYQRMLNRHMKCH), 146-168 (HLCTYCGKGFNDTFDLKRHVRTH), 174-197 (YKCSLCDKAFTQRCSLESHLKKIH), and 213-235 (YVCEECGCTSESQEGHVLHLKEH).

The protein localises to the nucleus. In terms of biological role, putative transcription factor. Involved in hair formation and spermatogenesis. May function in the differentiation and/or maintenance of the urogenital system. The polypeptide is Putative transcription factor Ovo-like 1 (OVOL1) (Bos taurus (Bovine)).